A 98-amino-acid polypeptide reads, in one-letter code: Integration host factor subunit alpha (98 aa).

The interval 49-70 is disordered; it reads FGNFDLRDKNQRPGRNPKTGED.

Belongs to the bacterial histone-like protein family. Heterodimer of an alpha and a beta chain.

This protein is one of the two subunits of integration host factor, a specific DNA-binding protein that functions in genetic recombination as well as in transcriptional and translational control. The sequence is that of Integration host factor subunit alpha from Yersinia pestis.